The following is a 343-amino-acid chain: Twinfilin (343 aa).

2 ADF-H domains span residues 4–139 (QTGI…KHKI) and 177–312 (GINC…EELH). A disordered region spans residues 317–343 (NLRPQFSKPKGPPSRGAKRLTKPQAVE).

The protein belongs to the actin-binding proteins ADF family. Twinfilin subfamily. In terms of assembly, interacts with G-actin; ADP-actin form.

The protein resides in the cytoplasm. Its subcellular location is the cytoskeleton. It localises to the cell cortex. Functionally, actin-binding protein involved in motile and morphological processes. Inhibits actin polymerization, likely by sequestering G-actin. The protein is Twinfilin (twf) of Aedes aegypti (Yellowfever mosquito).